We begin with the raw amino-acid sequence, 132 residues long: Large ribosomal subunit protein bL17 (132 aa).

Belongs to the bacterial ribosomal protein bL17 family. In terms of assembly, part of the 50S ribosomal subunit. Contacts protein L32.

In Shewanella sediminis (strain HAW-EB3), this protein is Large ribosomal subunit protein bL17.